The following is a 137-amino-acid chain: Ciliary microtubule inner protein 1 (137 aa).

As to expression, expressed in airway epithelial cells, renal tubular cells, pancreatic acinar cells and epithelial cells of the stomach, duodenum, and gallbladder (at protein level).

Its subcellular location is the cell projection. The protein resides in the cilium. The protein is Ciliary microtubule inner protein 1 of Homo sapiens (Human).